Consider the following 419-residue polypeptide: Imidazolonepropionase (419 aa).

Histidine 82 and histidine 84 together coordinate Fe(3+). Zn(2+) is bound by residues histidine 82 and histidine 84. 4-imidazolone-5-propanoate is bound by residues arginine 91, tyrosine 154, and histidine 187. Tyrosine 154 lines the N-formimidoyl-L-glutamate pocket. Histidine 252 serves as a coordination point for Fe(3+). Zn(2+) is bound at residue histidine 252. Glutamate 255 contributes to the 4-imidazolone-5-propanoate binding site. Aspartate 326 lines the Fe(3+) pocket. Position 326 (aspartate 326) interacts with Zn(2+). 2 residues coordinate N-formimidoyl-L-glutamate: asparagine 328 and glycine 330. A 4-imidazolone-5-propanoate-binding site is contributed by serine 331.

It belongs to the metallo-dependent hydrolases superfamily. HutI family. Requires Zn(2+) as cofactor. Fe(3+) serves as cofactor.

It localises to the cytoplasm. The enzyme catalyses 4-imidazolone-5-propanoate + H2O = N-formimidoyl-L-glutamate. The protein operates within amino-acid degradation; L-histidine degradation into L-glutamate; N-formimidoyl-L-glutamate from L-histidine: step 3/3. In terms of biological role, catalyzes the hydrolytic cleavage of the carbon-nitrogen bond in imidazolone-5-propanoate to yield N-formimidoyl-L-glutamate. It is the third step in the universal histidine degradation pathway. The sequence is that of Imidazolonepropionase from Clostridium tetani (strain Massachusetts / E88).